The sequence spans 112 residues: Thyroid transcription factor 1 (112 aa).

Residues R1 to A60 constitute a DNA-binding region (homeobox). The disordered stretch occupies residues Q59–V100. Gly residues predominate over residues S73–G83. Over residues C84–Q93 the composition is skewed to low complexity.

The protein belongs to the NK-2 homeobox family. Phosphorylated on serine residues.

The protein resides in the nucleus. In terms of biological role, transcription factor that binds and activates the promoter of thyroid specific genes such as thyroglobulin, thyroperoxidase, and thyrotropin receptor. Crucial in the maintenance of the thyroid differentiation phenotype. May play a role in lung development and surfactant homeostasis. The protein is Thyroid transcription factor 1 (TITF1) of Cavia porcellus (Guinea pig).